Reading from the N-terminus, the 345-residue chain is Ferrochelatase (345 aa).

Positions 215 and 296 each coordinate Fe cation.

Belongs to the ferrochelatase family.

It localises to the cytoplasm. The catalysed reaction is heme b + 2 H(+) = protoporphyrin IX + Fe(2+). Its pathway is porphyrin-containing compound metabolism; protoheme biosynthesis; protoheme from protoporphyrin-IX: step 1/1. Its function is as follows. Catalyzes the ferrous insertion into protoporphyrin IX. In Rhodopseudomonas palustris (strain ATCC BAA-98 / CGA009), this protein is Ferrochelatase.